A 313-amino-acid chain; its full sequence is Malate dehydrogenase (313 aa).

Residues 11–16 (GAGNIG) and aspartate 35 contribute to the NAD(+) site. The substrate site is built by arginine 84 and arginine 90. NAD(+)-binding positions include asparagine 97 and 120 to 122 (VTN). 2 residues coordinate substrate: asparagine 122 and arginine 153. Histidine 177 (proton acceptor) is an active-site residue.

Belongs to the LDH/MDH superfamily. MDH type 3 family.

It catalyses the reaction (S)-malate + NAD(+) = oxaloacetate + NADH + H(+). Its function is as follows. Catalyzes the reversible oxidation of malate to oxaloacetate. This chain is Malate dehydrogenase, found in Ehrlichia canis (strain Jake).